The primary structure comprises 474 residues: MSKQLPQDFVMGGATAAYQVEGATKEDGKGRVLWDDFLDKQGRFKPDPAADFYHRYDEDLALAEKYGHQVIRVSIAWSRIFPDGAGEVEPRGVAFYHKLFADCAAHHIEPFVTLHHFDTPERLHEAGDWLSQEMLDDFVAYAKFCFEEFSEVKYWITINEPTSMAVQQYTSGTFPPAESGRFDKTFQAEHNQMVAHARIVNLYKSMQLGGQIGIVHALQTVYPYSDSAVDHHAAELQDALENRLYLDGTLAGEYHQETLALVKEILDANHQPMFQSTPQEMKAIDEAAHQLDFVGVNNYFSKWLRAYHGKSETIHNGDGTKGSSVARLQGVGEEKLPDGIETTDWDWSIYPRGMYDILMRIHNDYPLVPVTYVTENGIGLKESLPENATPDTVIEDPKRIDYVKKYLSAMADAIHDGANVKGYFIWSLQDQFSWTNGYSKRYGLFFVDFPTQNRYIKQSAEWFKSVSETHIIPD.

D-galactose 6-phosphate contacts are provided by Gln19, His116, Asn159, Glu160, and Asn297. The active-site Proton donor is Glu160. Glu375 acts as the Nucleophile in catalysis. D-galactose 6-phosphate-binding residues include Ser433, Trp434, Lys440, and Tyr442.

Belongs to the glycosyl hydrolase 1 family.

It catalyses the reaction a 6-phospho-beta-D-galactoside + H2O = D-galactose 6-phosphate + an alcohol. It participates in carbohydrate metabolism; lactose degradation; D-galactose 6-phosphate and beta-D-glucose from lactose 6-phosphate: step 1/1. The protein is 6-phospho-beta-galactosidase of Lacticaseibacillus casei (strain BL23) (Lactobacillus casei).